Consider the following 98-residue polypeptide: NADH-ubiquinone oxidoreductase chain 4L (98 aa).

The next 3 helical transmembrane spans lie at 1 to 21 (MSMM…GLLM), 29 to 49 (SLLC…VTIL), and 61 to 81 (IILL…LVMV).

Belongs to the complex I subunit 4L family. As to quaternary structure, core subunit of respiratory chain NADH dehydrogenase (Complex I) which is composed of 45 different subunits.

The protein localises to the mitochondrion inner membrane. The catalysed reaction is a ubiquinone + NADH + 5 H(+)(in) = a ubiquinol + NAD(+) + 4 H(+)(out). Its function is as follows. Core subunit of the mitochondrial membrane respiratory chain NADH dehydrogenase (Complex I) which catalyzes electron transfer from NADH through the respiratory chain, using ubiquinone as an electron acceptor. Part of the enzyme membrane arm which is embedded in the lipid bilayer and involved in proton translocation. This chain is NADH-ubiquinone oxidoreductase chain 4L (MT-ND4L), found in Zalophus californianus (California sealion).